Consider the following 93-residue polypeptide: Small ribosomal subunit protein uS19c (93 aa).

Residues 73-93 are disordered; that stretch reads EFSPTRTFRGHTKSDKKSRRP. The span at 80–93 shows a compositional bias: basic residues; the sequence is FRGHTKSDKKSRRP.

This sequence belongs to the universal ribosomal protein uS19 family.

The protein localises to the plastid. Its subcellular location is the chloroplast. Functionally, protein S19 forms a complex with S13 that binds strongly to the 16S ribosomal RNA. The polypeptide is Small ribosomal subunit protein uS19c (rps19) (Mesostigma viride (Green alga)).